Reading from the N-terminus, the 467-residue chain is Tubulointerstitial nephritis antigen-like (467 aa).

The signal sequence occupies residues 1-21 (MWRCPLGLLLLLPLAGHLALG). The region spanning 50-98 (EQDLCCRGRADDCALPYLGAICYCDLFCNRTVSDCCPDFWDFCLGVPPP) is the SMB domain. Disulfide bonds link cysteine 54–cysteine 73, cysteine 71–cysteine 73, cysteine 71–cysteine 85, cysteine 77–cysteine 84, and cysteine 85–cysteine 92. N-linked (GlcNAc...) asparagine glycosylation occurs at asparagine 78. N-linked (GlcNAc...) asparagine glycosylation is present at asparagine 161.

The protein belongs to the peptidase C1 family. Post-translationally, glycosylated. As to expression, highly expressed in aorta, heart, placenta, kidney and a colorectal adenocarcinoma cell line. Moderately expressed in skeletal muscle, pancreas, lung, lymph nodes, adrenal gland, bone marrow and thyroid. Weakly expressed in colon, small intestine, ovary, spleen, testis and prostate. Predominantly found in vascular smooth muscle cells, but also in cardiac and skeletal muscle cells as well as kidney.

The protein localises to the secreted. Its function is as follows. May be implicated in the adrenocortical zonation and in mechanisms for repressing the CYP11B1 gene expression in adrenocortical cells. This is a non catalytic peptidase C1 family protein. The chain is Tubulointerstitial nephritis antigen-like (TINAGL1) from Homo sapiens (Human).